A 932-amino-acid polypeptide reads, in one-letter code: Myelin gene regulatory factor-like A (932 aa).

2 stretches are compositionally biased toward low complexity: residues 1–19 and 33–48; these read MDGYNQQQQQQQQQQQQHQ and QQQQQQQQQQQQQQQQ. Disordered stretches follow at residues 1–63, 152–256, 269–328, 540–568, 582–601, 613–660, and 680–726; these read MDGY…ISNG, VNSP…LSSS, TNTQ…NENP, VTPPGDLSPVHTPDYAGTSSNNGGGSNNM, TMNIVSPGHSPTSPRPLSQL, TQNH…NNNN, and NINN…CHWN. Over residues 49-59 the composition is skewed to polar residues; the sequence is PMNGSNNQLLG. A coiled-coil region spans residues 127–154; sequence LDSSFLMLQQQLQDQQQQIAQFNSSVNS. Low complexity-rich tracts occupy residues 152–249 and 277–294; these read VNSP…ANNT and PRSISPNPSPNLSPTNSP. The segment at residues 286-546 is a DNA-binding region (NDT80); it reads PNLSPTNSPI…ATQVTPPGDL (261 aa). The span at 311–328 shows a compositional bias: polar residues; it reads ENENSDPPSPMTQYNENP. Composition is skewed to low complexity over residues 615–660 and 680–721; these read NHNN…NNNN and NINN…NNNN. A Peptidase S74 domain is found at 767 to 877; the sequence is SDLRIKYDLK…KQMDEMKLKL (111 aa). Residues 863-895 adopt a coiled-coil conformation; sequence TQELSKQMDEMKLKLITYESKLKNLKKKSKNQT. A helical transmembrane segment spans residues 895–915; sequence TILLIIFMITFLLVALYMYKP.

The protein localises to the membrane. Its function is as follows. Transcription factor which acts as a key regulator of pstA (prestalk-A) cells differentiation. Essential for ecmA-specific gene expression. The chain is Myelin gene regulatory factor-like A (mrfA) from Dictyostelium discoideum (Social amoeba).